We begin with the raw amino-acid sequence, 557 residues long: Chaperonin GroEL 1 (557 aa).

Residues 29–32, Lys-50, 86–90, Gly-416, and Asp-495 contribute to the ATP site; these read TLGP and DGTTT.

It belongs to the chaperonin (HSP60) family. In terms of assembly, forms a cylinder of 14 subunits composed of two heptameric rings stacked back-to-back. Interacts with the co-chaperonin GroES.

Its subcellular location is the cytoplasm. It carries out the reaction ATP + H2O + a folded polypeptide = ADP + phosphate + an unfolded polypeptide.. Its function is as follows. Together with its co-chaperonin GroES, plays an essential role in assisting protein folding. The GroEL-GroES system forms a nano-cage that allows encapsulation of the non-native substrate proteins and provides a physical environment optimized to promote and accelerate protein folding. This is Chaperonin GroEL 1 from Protochlamydia amoebophila (strain UWE25).